Consider the following 314-residue polypeptide: Ferrochelatase (314 aa).

Positions 188 and 269 each coordinate Fe cation.

Belongs to the ferrochelatase family.

The protein localises to the cytoplasm. The catalysed reaction is heme b + 2 H(+) = protoporphyrin IX + Fe(2+). It functions in the pathway porphyrin-containing compound metabolism; protoheme biosynthesis; protoheme from protoporphyrin-IX: step 1/1. Functionally, catalyzes the ferrous insertion into protoporphyrin IX. This Campylobacter fetus subsp. fetus (strain 82-40) protein is Ferrochelatase.